The primary structure comprises 464 residues: Fumarate hydratase class II (464 aa).

Residues 97 to 99 (SGT), 128 to 131 (HPND), 138 to 140 (SSN), and Thr186 each bind substrate. The active-site Proton donor/acceptor is His187. Residue Ser317 is part of the active site. Substrate is bound by residues Ser318 and 323 to 325 (KVN).

The protein belongs to the class-II fumarase/aspartase family. Fumarase subfamily. Homotetramer.

The protein resides in the cytoplasm. The catalysed reaction is (S)-malate = fumarate + H2O. Its pathway is carbohydrate metabolism; tricarboxylic acid cycle; (S)-malate from fumarate: step 1/1. Functionally, involved in the TCA cycle. Catalyzes the stereospecific interconversion of fumarate to L-malate. The chain is Fumarate hydratase class II from Leptospira interrogans serogroup Icterohaemorrhagiae serovar copenhageni (strain Fiocruz L1-130).